We begin with the raw amino-acid sequence, 235 residues long: Phosphoribosylaminoimidazole-succinocarboxamide synthase (235 aa).

Belongs to the SAICAR synthetase family.

The enzyme catalyses 5-amino-1-(5-phospho-D-ribosyl)imidazole-4-carboxylate + L-aspartate + ATP = (2S)-2-[5-amino-1-(5-phospho-beta-D-ribosyl)imidazole-4-carboxamido]succinate + ADP + phosphate + 2 H(+). The protein operates within purine metabolism; IMP biosynthesis via de novo pathway; 5-amino-1-(5-phospho-D-ribosyl)imidazole-4-carboxamide from 5-amino-1-(5-phospho-D-ribosyl)imidazole-4-carboxylate: step 1/2. This Thermoanaerobacter pseudethanolicus (strain ATCC 33223 / 39E) (Clostridium thermohydrosulfuricum) protein is Phosphoribosylaminoimidazole-succinocarboxamide synthase.